The following is a 73-amino-acid chain: Putative membrane protein insertion efficiency factor (73 aa).

It belongs to the UPF0161 family.

The protein resides in the cell inner membrane. Could be involved in insertion of integral membrane proteins into the membrane. The protein is Putative membrane protein insertion efficiency factor of Phocaeicola vulgatus (strain ATCC 8482 / DSM 1447 / JCM 5826 / CCUG 4940 / NBRC 14291 / NCTC 11154) (Bacteroides vulgatus).